Reading from the N-terminus, the 134-residue chain is Large ribosomal subunit protein uL16c (134 aa).

It belongs to the universal ribosomal protein uL16 family. In terms of assembly, part of the 50S ribosomal subunit.

The protein localises to the plastid. Its subcellular location is the chloroplast. In Nephroselmis olivacea (Green alga), this protein is Large ribosomal subunit protein uL16c.